The chain runs to 432 residues: Trigger factor (432 aa).

Positions 163–248 (GDIAVIDFEG…LKALNKKELP (86 aa)) constitute a PPIase FKBP-type domain.

It belongs to the FKBP-type PPIase family. Tig subfamily.

It localises to the cytoplasm. It catalyses the reaction [protein]-peptidylproline (omega=180) = [protein]-peptidylproline (omega=0). Functionally, involved in protein export. Acts as a chaperone by maintaining the newly synthesized protein in an open conformation. Functions as a peptidyl-prolyl cis-trans isomerase. The polypeptide is Trigger factor (Caldanaerobacter subterraneus subsp. tengcongensis (strain DSM 15242 / JCM 11007 / NBRC 100824 / MB4) (Thermoanaerobacter tengcongensis)).